A 143-amino-acid chain; its full sequence is Transcriptional regulator MraZ (143 aa).

SpoVT-AbrB domains are found at residues 5-47 and 76-119; these read EYQH…PKEE and AGEC…SRER.

The protein belongs to the MraZ family. As to quaternary structure, forms oligomers.

It localises to the cytoplasm. The protein localises to the nucleoid. The sequence is that of Transcriptional regulator MraZ from Heliobacterium modesticaldum (strain ATCC 51547 / Ice1).